A 142-amino-acid polypeptide reads, in one-letter code: Centromere protein S (142 aa).

The tract at residues 107–142 is disordered; the sequence is LKGKAKKKRKPEDESRSSRESMAEELDGAEELQSES. The span at 116 to 128 shows a compositional bias: basic and acidic residues; that stretch reads KPEDESRSSRESM. Acidic residues predominate over residues 129 to 142; sequence AEELDGAEELQSES.

The protein belongs to the TAF9 family. CENP-S/MHF1 subfamily. In terms of assembly, heterodimer with CENPX, sometimes called MHF; this interaction stabilizes both partners. MHF heterodimers can assemble to form tetrameric structures. MHF also coassemble with CENPT-CENPW heterodimers at centromeres to form the tetrameric CENP-T-W-S-X complex. Forms a discrete complex with FANCM and CENPX, called FANCM-MHF; this interaction, probably mediated by direct binding between CENPS and FANCM, leads to synergistic activation of double-stranded DNA binding and strongly stimulates FANCM-mediated DNA remodeling. Recruited by FANCM to the Fanconi anemia (FA) core complex, which consists of CENPS, CENPX, FANCA, FANCB, FANCC, FANCE, FANCF, FANCG, FANCL, FANCM, FAAP24 and FAAP100. The FA core complex associates with Bloom syndrome (BLM) complex, which consists of at least BLM, DNA topoisomerase 3-alpha (TOP3A), RMI1/BLAP75, RPA1/RPA70 and RPA2/RPA32. The super complex between FA and BLM is called BRAFT. Component of the CENPA-CAD complex, composed of CENPI, CENPK, CENPL, CENPO, CENPP, CENPQ, CENPR and CENPS. The CENPA-CAD complex is probably recruited on centromeres by the CENPA-NAC complex, at least composed of CENPA, CENPC, CENPH, CENPM, CENPN, CENPT and CENPU.

Its subcellular location is the nucleus. The protein localises to the chromosome. It is found in the centromere. The protein resides in the kinetochore. Its function is as follows. DNA-binding component of the Fanconi anemia (FA) core complex. Required for the normal activation of the FA pathway, leading to monoubiquitination of the FANCI-FANCD2 complex in response to DNA damage, cellular resistance to DNA cross-linking drugs, and prevention of chromosomal breakage. In complex with CENPX (MHF heterodimer), crucial cofactor for FANCM in both binding and ATP-dependent remodeling of DNA. Stabilizes FANCM. In complex with CENPX and FANCM (but not other FANC proteins), rapidly recruited to blocked forks and promotes gene conversion at blocked replication forks. In complex with CENPT, CENPW and CENPX (CENP-T-W-S-X heterotetramer), involved in the formation of a functional kinetochore outer plate, which is essential for kinetochore-microtubule attachment and faithful mitotic progression. As a component of MHF and CENP-T-W-S-X complexes, binds DNA and bends it to form a nucleosome-like structure. DNA-binding function is fulfilled in the presence of CENPX, with the following preference for DNA substates: Holliday junction &gt; double-stranded &gt; splay arm &gt; single-stranded. Does not bind DNA on its own. This Mus musculus (Mouse) protein is Centromere protein S (Cenps).